The following is a 430-amino-acid chain: MLDITLLRDSPDEIVTMLHNRQQPEDEPKLRQLLEEDAERRKLVQESDELKSLRNRKSKEIAEIKKSGSGSADALILEMQSVGTAIAEMDSRLTALETSMEDILLALPNRLHPSVPVGRSAEENEVFGEPVSFTHPLDFSLKNHLELGKSLGILDFERGAKVSGAGFPVYVGKGARLERALINFMLDSHTEKHGYKEVFPPFMVNRESLRGTGQWPKFAGEVYHAPEDELYLIPTAEVPVTNLHRGELLETESLPISYAAYSACFRREAGSYGKETRGFLRVHQFNKVEMVKFTKPEDSYQALEDIRGHAEAILRALEIPYRVLLLCSGDISANAAKCYDIEVWSPAEEKYLEASSCSNFEDYQARRANIRFRRDGKSKPEFVHTLNGSGLATSRLMVSLMEHYQTPEGGILVPEVLKPYTGFSEITPSA.

Residue 235-237 (TAE) participates in L-serine binding. ATP-binding positions include 266-268 (RRE) and V282. Position 289 (E289) interacts with L-serine. 353–356 (EASS) is an ATP binding site. S389 contacts L-serine.

It belongs to the class-II aminoacyl-tRNA synthetase family. Type-1 seryl-tRNA synthetase subfamily. In terms of assembly, homodimer. The tRNA molecule binds across the dimer.

It is found in the cytoplasm. The enzyme catalyses tRNA(Ser) + L-serine + ATP = L-seryl-tRNA(Ser) + AMP + diphosphate + H(+). The catalysed reaction is tRNA(Sec) + L-serine + ATP = L-seryl-tRNA(Sec) + AMP + diphosphate + H(+). The protein operates within aminoacyl-tRNA biosynthesis; selenocysteinyl-tRNA(Sec) biosynthesis; L-seryl-tRNA(Sec) from L-serine and tRNA(Sec): step 1/1. Functionally, catalyzes the attachment of serine to tRNA(Ser). Is also able to aminoacylate tRNA(Sec) with serine, to form the misacylated tRNA L-seryl-tRNA(Sec), which will be further converted into selenocysteinyl-tRNA(Sec). In Chlorobium phaeovibrioides (strain DSM 265 / 1930) (Prosthecochloris vibrioformis (strain DSM 265)), this protein is Serine--tRNA ligase.